The following is a 282-amino-acid chain: 4-diphosphocytidyl-2-C-methyl-D-erythritol kinase (282 aa).

Lys-9 is an active-site residue. 98–108 (PMGGGLGGGSS) is an ATP binding site. The active site involves Asp-140.

The protein belongs to the GHMP kinase family. IspE subfamily. As to quaternary structure, homodimer.

The catalysed reaction is 4-CDP-2-C-methyl-D-erythritol + ATP = 4-CDP-2-C-methyl-D-erythritol 2-phosphate + ADP + H(+). Its pathway is isoprenoid biosynthesis; isopentenyl diphosphate biosynthesis via DXP pathway; isopentenyl diphosphate from 1-deoxy-D-xylulose 5-phosphate: step 3/6. Its function is as follows. Catalyzes the phosphorylation of the position 2 hydroxy group of 4-diphosphocytidyl-2C-methyl-D-erythritol. This chain is 4-diphosphocytidyl-2-C-methyl-D-erythritol kinase, found in Klebsiella pneumoniae (strain 342).